Consider the following 1665-residue polypeptide: Cortactin-binding protein 2 (1665 aa).

Disordered stretches follow at residues 1–23 (MATD…AGAT), 201–235 (EEKK…SEFD), 360–441 (ASHG…LHPG), 455–480 (GNAN…PTSR), and 499–617 (RFTS…PKPS). Residues 120–276 (KMQERMSTQL…EQLKRGNDNK (157 aa)) adopt a coiled-coil conformation. Residues 385-395 (GPSTGSTADLT) show a composition bias toward polar residues. The residue at position 499 (Arg-499) is an Asymmetric dimethylarginine. Positions 584–594 (TVASPPSSLPQ) are enriched in polar residues. ANK repeat units follow at residues 710–740 (GRPT…DINY), 744–773 (DGHS…QVDA), 777–806 (NGFT…NINH), 810–839 (GGQT…DRSI), 843–872 (DGWT…PAHG), and 914–944 (EGWT…EPER). Positions 1447–1484 (CSKKKGESGAWRKVSTSPRKKSSRFSSPTWNKPDLSEE) are disordered. Phosphoserine is present on Ser-1526. The span at 1544-1562 (SESDISKIADSRDDLRRFD) shows a compositional bias: basic and acidic residues. A disordered region spans residues 1544–1648 (SESDISKIAD…RQIEINNNSK (105 aa)). Composition is skewed to polar residues over residues 1564 to 1576 (PGNN…TVNN) and 1584 to 1604 (KEVS…QSKT). The span at 1626 to 1640 (SQNTKRSSSSSNTRQ) shows a compositional bias: low complexity.

As to quaternary structure, interacts with CTTN/cortactin SH3 domain. Interacts with STRN, STRN4/zinedin and MOB4/phocein; this interactions mediate the association with the STRIPAK core complex and may regulate dendritic spine distribution of the STRIPAK complex in hippocampal neurons. Activation of glutamate receptors weakens the interaction with STRN and STRN4.

It localises to the cytoplasm. The protein localises to the cell cortex. It is found in the cell projection. The protein resides in the dendritic spine. Regulates the dendritic spine distribution of CTTN/cortactin in hippocampal neurons, and thus controls dendritic spinogenesis and dendritic spine maintenance. Associates with the striatin-interacting phosphatase and kinase (STRIPAK) core complex to regulate dendritic spine distribution of the STRIPAK complex in hippocampal neurons. The chain is Cortactin-binding protein 2 (CTTNBP2) from Equus caballus (Horse).